We begin with the raw amino-acid sequence, 92 residues long: Small ribosomal subunit protein uS17 (92 aa).

The protein belongs to the universal ribosomal protein uS17 family. Part of the 30S ribosomal subunit.

One of the primary rRNA binding proteins, it binds specifically to the 5'-end of 16S ribosomal RNA. The protein is Small ribosomal subunit protein uS17 of Mycoplasma mobile (strain ATCC 43663 / 163K / NCTC 11711) (Mesomycoplasma mobile).